The following is a 271-amino-acid chain: MAACTMSVCSSACSDSWRVDDCPESCCEPPCGTAPCLTLVCTPVSCVSSPCCQAACEPSPCQSGCTSSCTPSCCQPACCASSPCQQACCVPVCCKPVCCLPTCSKDSSSCCQQSSCQPTCCASSSCQQSCCVPVCCKPVCCVPTCSEDSSSCCQHSSCQPTCCTSSPCQQSCYVPVCCKPVCCKPICCVPVCSGASTSCCQQSSCQPACCTTSCCRPSSSVSLLCRPICRPACCLPISSCCAPASSYQASCCRPASCVSLLCRPACSPLAC.

22 tandem repeats follow at residues Cys26–Pro30, Cys51–Ala55, Cys73–Ala77, Cys78–Ser82, Cys88–Val92, Cys93–Val97, Cys98–Thr102, Cys110–Ser114, Cys120–Ser124, Cys130–Val134, Cys135–Val139, Cys140–Thr144, Cys152–Ser156, Cys162–Ser166, Cys177–Val181, Cys187–Val191, Cys199–Ser203, Cys209–Ser213, Cys214–Ser218, Cys233–Ile237, Cys240–Ala244, and Cys251–Ala255. The tract at residues Cys26 to Ala255 is 22 X 5 AA repeats of C-C-X(3).

This sequence belongs to the KRTAP type 10 family. In terms of assembly, interacts with hair keratins. In terms of tissue distribution, restricted to a narrow region of the hair fiber cuticle, lying approximately 20 cell layers above the apex of the dermal papilla of the hair root; not detected in any other tissues.

In terms of biological role, in the hair cortex, hair keratin intermediate filaments are embedded in an interfilamentous matrix, consisting of hair keratin-associated proteins (KRTAP), which are essential for the formation of a rigid and resistant hair shaft through their extensive disulfide bond cross-linking with abundant cysteine residues of hair keratins. The matrix proteins include the high-sulfur and high-glycine-tyrosine keratins. This Homo sapiens (Human) protein is Keratin-associated protein 10-5 (KRTAP10-5).